Consider the following 972-residue polypeptide: C-1-tetrahydrofolate synthase, mitochondrial (972 aa).

The transit peptide at 1-55 directs the protein to the mitochondrion; sequence MNVMVSFNQLRNYFLESNSLRPSKWLFQSYGTSSSANILNGKLLARKLQRSVAEE. The tract at residues 56 to 340 is methylenetetrahydrofolate dehydrogenase and cyclohydrolase; that stretch reads VQALKAKDRN…DLNPLELKKP (285 aa). Residues 84-88 and 131-133 contribute to the substrate site; these read YVRMK and VQL. NADP(+)-binding positions include 202-204 and Ser-227; that span reads GRS. 299 to 303 provides a ligand contact to substrate; it reads PGGVG. Positions 341 to 972 are formyltetrahydrofolate synthetase; sequence VPSDIEIANS…CENGEIVGLS (632 aa). Residue 405–412 participates in ATP binding; it reads TPFGEGKS.

This sequence in the N-terminal section; belongs to the tetrahydrofolate dehydrogenase/cyclohydrolase family. It in the C-terminal section; belongs to the formate--tetrahydrofolate ligase family. Homodimer.

It is found in the mitochondrion. It carries out the reaction (6R)-5,10-methylene-5,6,7,8-tetrahydrofolate + NADP(+) = (6R)-5,10-methenyltetrahydrofolate + NADPH. The catalysed reaction is (6R)-5,10-methenyltetrahydrofolate + H2O = (6R)-10-formyltetrahydrofolate + H(+). The enzyme catalyses (6S)-5,6,7,8-tetrahydrofolate + formate + ATP = (6R)-10-formyltetrahydrofolate + ADP + phosphate. It functions in the pathway one-carbon metabolism; tetrahydrofolate interconversion. Mitochondrial isozyme of C-1-tetrahydrofolate synthase. The trifunctional enzyme catalyzes the interconversion of the one-carbon derivatives of tetrahydrofolate (THF) between different oxidation states by the enzymatic activities 10-formyltetrahydrofolate synthetase, 5,lO-methenyltetrahydrofolate cyclohydrolase, and 5,lO-methylenetetrahydrofolate dehydrogenase. The protein is C-1-tetrahydrofolate synthase, mitochondrial (ade9) of Schizosaccharomyces pombe (strain 972 / ATCC 24843) (Fission yeast).